A 75-amino-acid polypeptide reads, in one-letter code: Brevinin-2SN1 (75 aa).

Residues 1–22 (MFTMKKPLLFLFFLGTISLSFC) form the signal peptide. Positions 23 to 40 (EEERGADEDDEVEMTEEE) are cleaved as a propeptide — removed in mature form. A disulfide bridge links cysteine 69 with cysteine 75.

Belongs to the frog skin active peptide (FSAP) family. Brevinin subfamily. In terms of tissue distribution, expressed by the skin glands.

Its subcellular location is the secreted. Antimicrobial peptide. Active against some Gram-negative and a variety of Gram-positive bacterial strains. Active against fungus C.glabrata 090902 but not against C.albicans ATCC 10231. Shows hemolytic activity against human erythrocytes. The chain is Brevinin-2SN1 from Sylvirana spinulosa (Fine-spined frog).